The primary structure comprises 332 residues: Fructose-1,6-bisphosphatase class 1 (332 aa).

Residues Glu89, Asp110, Leu112, and Asp113 each coordinate Mg(2+). Residues 113–116 (DGSS), Asn206, Tyr239, 257–259 (YLY), and Lys269 each bind substrate. Glu275 serves as a coordination point for Mg(2+).

It belongs to the FBPase class 1 family. As to quaternary structure, homotetramer. It depends on Mg(2+) as a cofactor.

It is found in the cytoplasm. The enzyme catalyses beta-D-fructose 1,6-bisphosphate + H2O = beta-D-fructose 6-phosphate + phosphate. Its pathway is carbohydrate biosynthesis; gluconeogenesis. The sequence is that of Fructose-1,6-bisphosphatase class 1 from Escherichia coli O157:H7.